We begin with the raw amino-acid sequence, 147 residues long: UPAR/Ly6 domain-containing protein CG9338 (147 aa).

The N-terminal stretch at M1–A23 is a signal peptide. Topologically, residues I24–T126 are extracellular. 5 disulfide bridges follow: C26-C72, C29-C37, C51-C89, C101-C115, and C118-C123. A glycan (N-linked (GlcNAc...) asparagine) is linked at N68. Residue N124 is the site of GPI-anchor amidated asparagine attachment. Residues G125 to A147 constitute a propeptide, removed in mature form. The helical transmembrane segment at S127 to A147 threads the bilayer.

This sequence belongs to the quiver family.

It is found in the cell membrane. May be involved in regulating neuron excitability. The chain is UPAR/Ly6 domain-containing protein CG9338 from Drosophila melanogaster (Fruit fly).